Here is a 145-residue protein sequence, read N- to C-terminus: Transcription antitermination protein NusB (145 aa).

It belongs to the NusB family.

Functionally, involved in transcription antitermination. Required for transcription of ribosomal RNA (rRNA) genes. Binds specifically to the boxA antiterminator sequence of the ribosomal RNA (rrn) operons. This chain is Transcription antitermination protein NusB, found in Burkholderia vietnamiensis (strain G4 / LMG 22486) (Burkholderia cepacia (strain R1808)).